We begin with the raw amino-acid sequence, 1073 residues long: Carbamoyl phosphate synthase large chain (1073 aa).

The tract at residues 2 to 403 (PKRTDIKSIL…SLQKALRGLE (402 aa)) is carboxyphosphate synthetic domain. 12 residues coordinate ATP: Arg129, Arg169, Gly175, Gly176, Glu208, Leu210, Glu215, Gly241, Ile242, His243, Gln285, and Glu299. Positions 133-328 (DVAMKKIGLE…IAKVAAKLAV (196 aa)) constitute an ATP-grasp 1 domain. Residues Gln285, Glu299, and Asn301 each coordinate Mg(2+). Residues Gln285, Glu299, and Asn301 each contribute to the Mn(2+) site. Positions 404–553 (VGATGFDPKV…YSTYEEECEA (150 aa)) are oligomerization domain. A carbamoyl phosphate synthetic domain region spans residues 554–936 (NPSTDREKIM…AFAKAQLGSN (383 aa)). The 192-residue stretch at 679 to 870 (QHAVDRLKLK…LAKVAARVMA (192 aa)) folds into the ATP-grasp 2 domain. ATP contacts are provided by Arg715, His754, Leu756, Glu761, Gly786, Val787, His788, Ser789, Gln829, and Glu841. Gln829, Glu841, and Asn843 together coordinate Mg(2+). Mn(2+) contacts are provided by Gln829, Glu841, and Asn843. Positions 937-1073 (STMKKHGRAL…SVQEMHAQIK (137 aa)) constitute an MGS-like domain. Positions 937 to 1073 (STMKKHGRAL…SVQEMHAQIK (137 aa)) are allosteric domain.

The protein belongs to the CarB family. In terms of assembly, composed of two chains; the small (or glutamine) chain promotes the hydrolysis of glutamine to ammonia, which is used by the large (or ammonia) chain to synthesize carbamoyl phosphate. Tetramer of heterodimers (alpha,beta)4. Mg(2+) is required as a cofactor. Mn(2+) serves as cofactor.

It catalyses the reaction hydrogencarbonate + L-glutamine + 2 ATP + H2O = carbamoyl phosphate + L-glutamate + 2 ADP + phosphate + 2 H(+). The enzyme catalyses hydrogencarbonate + NH4(+) + 2 ATP = carbamoyl phosphate + 2 ADP + phosphate + 2 H(+). Its pathway is amino-acid biosynthesis; L-arginine biosynthesis; carbamoyl phosphate from bicarbonate: step 1/1. It participates in pyrimidine metabolism; UMP biosynthesis via de novo pathway; (S)-dihydroorotate from bicarbonate: step 1/3. In terms of biological role, large subunit of the glutamine-dependent carbamoyl phosphate synthetase (CPSase). CPSase catalyzes the formation of carbamoyl phosphate from the ammonia moiety of glutamine, carbonate, and phosphate donated by ATP, constituting the first step of 2 biosynthetic pathways, one leading to arginine and/or urea and the other to pyrimidine nucleotides. The large subunit (synthetase) binds the substrates ammonia (free or transferred from glutamine from the small subunit), hydrogencarbonate and ATP and carries out an ATP-coupled ligase reaction, activating hydrogencarbonate by forming carboxy phosphate which reacts with ammonia to form carbamoyl phosphate. The chain is Carbamoyl phosphate synthase large chain from Escherichia coli O157:H7.